Reading from the N-terminus, the 204-residue chain is Recombination protein RecR (204 aa).

Residues 59 to 74 form a C4-type zinc finger; that stretch reads CTRCNTFTELEICGTC. The region spanning 82–181 is the Toprim domain; the sequence is TLLCVVETPA…KVSRLARGVP (100 aa).

This sequence belongs to the RecR family.

May play a role in DNA repair. It seems to be involved in an RecBC-independent recombinational process of DNA repair. It may act with RecF and RecO. The protein is Recombination protein RecR of Cupriavidus metallidurans (strain ATCC 43123 / DSM 2839 / NBRC 102507 / CH34) (Ralstonia metallidurans).